We begin with the raw amino-acid sequence, 180 residues long: Bifunctional protein PyrR (180 aa).

The PRPP-binding signature appears at 99–111 (VILVDDVLYTCRT).

It belongs to the purine/pyrimidine phosphoribosyltransferase family. PyrR subfamily. As to quaternary structure, homodimer and homohexamer; in equilibrium.

It carries out the reaction UMP + diphosphate = 5-phospho-alpha-D-ribose 1-diphosphate + uracil. Functionally, regulates transcriptional attenuation of the pyrimidine nucleotide (pyr) operon by binding in a uridine-dependent manner to specific sites on pyr mRNA. This disrupts an antiterminator hairpin in the RNA and favors formation of a downstream transcription terminator, leading to a reduced expression of downstream genes. Its function is as follows. Also displays a weak uracil phosphoribosyltransferase activity which is not physiologically significant. The chain is Bifunctional protein PyrR from Clostridium botulinum (strain Eklund 17B / Type B).